Here is a 317-residue protein sequence, read N- to C-terminus: WSCD family member CG9164 (317 aa).

Residues 8–28 (FFGVSATIIIYIGGVLFLSMN) form a helical membrane-spanning segment. Residues asparagine 151, asparagine 227, and asparagine 233 are each glycosylated (N-linked (GlcNAc...) asparagine).

The protein belongs to the WSCD family.

The protein localises to the membrane. The sequence is that of WSCD family member CG9164 from Drosophila melanogaster (Fruit fly).